The chain runs to 866 residues: Probable outer membrane usher protein ElfC (866 aa).

The signal sequence occupies residues 1–35 (MYRTHRQHSLLSSGGVPSFIGGLVVFVSAAFNAQA).

It belongs to the fimbrial export usher family.

Its subcellular location is the cell outer membrane. In terms of biological role, part of the elfADCG fimbrial operon, which could be required for adherence to host epithelial cells. Could be involved in the export and assembly of the ElfA fimbrial subunits across the outer membrane. This is Probable outer membrane usher protein ElfC (elfC) from Escherichia coli O157:H7.